We begin with the raw amino-acid sequence, 464 residues long: Protein FAM90A22 (464 aa).

Disordered stretches follow at residues methionine 1–lysine 43, proline 70–alanine 389, and histidine 415–proline 437. 2 stretches are compositionally biased toward basic and acidic residues: residues glycine 74–alanine 89 and asparagine 97–arginine 114. Over residues serine 182–leucine 197 the composition is skewed to low complexity.

It belongs to the FAM90 family.

The chain is Protein FAM90A22 from Homo sapiens (Human).